Here is a 316-residue protein sequence, read N- to C-terminus: N-acetyl-gamma-glutamyl-phosphate reductase (316 aa).

Residue Cys-136 is part of the active site.

The protein belongs to the NAGSA dehydrogenase family. Type 1 subfamily.

It localises to the cytoplasm. It carries out the reaction N-acetyl-L-glutamate 5-semialdehyde + phosphate + NADP(+) = N-acetyl-L-glutamyl 5-phosphate + NADPH + H(+). The protein operates within amino-acid biosynthesis; L-arginine biosynthesis; N(2)-acetyl-L-ornithine from L-glutamate: step 3/4. Its function is as follows. Catalyzes the NADPH-dependent reduction of N-acetyl-5-glutamyl phosphate to yield N-acetyl-L-glutamate 5-semialdehyde. This Xanthomonas campestris pv. campestris (strain B100) protein is N-acetyl-gamma-glutamyl-phosphate reductase.